A 299-amino-acid chain; its full sequence is Protease HtpX homolog (299 aa).

2 consecutive transmembrane segments (helical) span residues 15-35 (ILLL…GYLF) and 39-59 (GLGG…SMIF). Histidine 143 is a binding site for Zn(2+). Glutamate 144 is an active-site residue. Histidine 147 contributes to the Zn(2+) binding site. 2 helical membrane passes run 158–178 (IAVA…RMMW) and 198–218 (IIML…ATLV). Residue glutamate 227 participates in Zn(2+) binding.

Belongs to the peptidase M48B family. Zn(2+) serves as cofactor.

The protein resides in the cell membrane. The polypeptide is Protease HtpX homolog (Streptococcus pneumoniae (strain P1031)).